We begin with the raw amino-acid sequence, 126 residues long: Methylglyoxal synthase (126 aa).

One can recognise an MGS-like domain in the interval 1–126 (MADRKCLALI…AEQLIDFRRN (126 aa)). Substrate contacts are provided by residues His-12, Lys-16, 38–41 (TGTT), and 59–60 (SG). Asp-65 (proton donor/acceptor) is an active-site residue. His-92 lines the substrate pocket.

This sequence belongs to the methylglyoxal synthase family.

The enzyme catalyses dihydroxyacetone phosphate = methylglyoxal + phosphate. Its function is as follows. Catalyzes the formation of methylglyoxal from dihydroxyacetone phosphate. The sequence is that of Methylglyoxal synthase from Rhizobium meliloti (strain 1021) (Ensifer meliloti).